A 181-amino-acid chain; its full sequence is Malignant T-cell-amplified sequence 2 (181 aa).

Residues Leu92 to Asn171 form the PUA domain.

It belongs to the MCTS1 family.

It is found in the cytoplasm. This chain is Malignant T-cell-amplified sequence 2, found in Mus musculus (Mouse).